The chain runs to 55 residues: Large ribosomal subunit protein bL32 (55 aa).

A disordered region spans residues 1-27; the sequence is MAVQQNKPTRSKRGMRRSHDALTTATL.

The protein belongs to the bacterial ribosomal protein bL32 family.

The polypeptide is Large ribosomal subunit protein bL32 (Yersinia enterocolitica serotype O:8 / biotype 1B (strain NCTC 13174 / 8081)).